A 498-amino-acid polypeptide reads, in one-letter code: ATP synthase subunit beta, chloroplastic (498 aa).

Residue Thr6 is modified to Phosphothreonine. A Phosphoserine modification is found at Ser13. Position 172–179 (172–179 (GGAGVGKT)) interacts with ATP.

The protein belongs to the ATPase alpha/beta chains family. As to quaternary structure, F-type ATPases have 2 components, CF(1) - the catalytic core - and CF(0) - the membrane proton channel. CF(1) has five subunits: alpha(3), beta(3), gamma(1), delta(1), epsilon(1). CF(0) has four main subunits: a(1), b(1), b'(1) and c(9-12).

The protein resides in the plastid. The protein localises to the chloroplast thylakoid membrane. It carries out the reaction ATP + H2O + 4 H(+)(in) = ADP + phosphate + 5 H(+)(out). Produces ATP from ADP in the presence of a proton gradient across the membrane. The catalytic sites are hosted primarily by the beta subunits. This is ATP synthase subunit beta, chloroplastic from Barbarea verna (Land cress).